The following is an 89-amino-acid chain: Mu-like prophage FluMu DNA-binding protein Ner (89 aa).

A DNA-binding region (H-T-H motif) is located at residues 57-76 (ERLVANAIGVPPEVIWAGRF).

The protein belongs to the ner transcriptional regulatory family.

Functionally, negative regulator of transcription starting from the Pe and Pc promoters of Mu. Also negatively regulates its own gene transcription. In Haemophilus influenzae (strain ATCC 51907 / DSM 11121 / KW20 / Rd), this protein is Mu-like prophage FluMu DNA-binding protein Ner (nlp).